We begin with the raw amino-acid sequence, 76 residues long: Large ribosomal subunit protein eL20 (76 aa).

Belongs to the eukaryotic ribosomal protein eL20 family. In terms of assembly, part of the 50S ribosomal subunit. Binds 23S rRNA.

The protein is Large ribosomal subunit protein eL20 of Methanococcus vannielii (strain ATCC 35089 / DSM 1224 / JCM 13029 / OCM 148 / SB).